Consider the following 215-residue polypeptide: Transmembrane protein 267 (215 aa).

A run of 3 helical transmembrane segments spans residues 77–97 (FCEV…HFFL), 114–134 (PLHC…LMQL), and 178–198 (YWLY…IMCL).

Its subcellular location is the membrane. This Xenopus laevis (African clawed frog) protein is Transmembrane protein 267 (tmem267).